A 376-amino-acid chain; its full sequence is Putative dihydroorotase (376 aa).

Residues His-35 and His-37 each coordinate Zn(2+). Substrate is bound by residues 37–39 (HVR) and Asn-66. Zn(2+) is bound by residues Asp-114, His-138, and His-187. Asn-230 is a substrate binding site. Zn(2+) is bound at residue Asp-257. Residue Asp-257 is part of the active site. Substrate contacts are provided by residues His-261 and 273 to 274 (YG).

This sequence belongs to the metallo-dependent hydrolases superfamily. DHOase family. Class I DHOase subfamily. Zn(2+) is required as a cofactor.

The enzyme catalyses (S)-dihydroorotate + H2O = N-carbamoyl-L-aspartate + H(+). The protein operates within pyrimidine metabolism; UMP biosynthesis via de novo pathway; (S)-dihydroorotate from bicarbonate: step 3/3. In terms of biological role, catalyzes the reversible cyclization of carbamoyl aspartate to dihydroorotate. The chain is Putative dihydroorotase (pyrC) from Thermotoga maritima (strain ATCC 43589 / DSM 3109 / JCM 10099 / NBRC 100826 / MSB8).